A 1481-amino-acid chain; its full sequence is DNA excision repair protein ERCC-6 (1481 aa).

Residues 1-506 are N-terminal domain; essential for its chromatin remodeling activity; sequence MFHEEVPNST…GFLFKKLFKY (506 aa). At serine 158 the chain carries Phosphoserine; by CDK2. Residue lysine 170 is modified to N6-methylated lysine; by EHMT2. A Glycyl lysine isopeptide (Lys-Gly) (interchain with G-Cter in SUMO2) cross-link involves residue lysine 256. At lysine 298 the chain carries N6-methylated lysine; by EHMT2. The segment at 309 to 452 is disordered; that stretch reads AIETKADQRS…RKVARRQDDG (144 aa). Residues 327–337 show a composition bias toward basic residues; the sequence is RLKKHSRKLQR. The segment covering 353–363 has biased composition (basic and acidic residues); that stretch reads KPLEPEVRPEA. 2 stretches are compositionally biased toward acidic residues: residues 378–390 and 420–435; these read DGEEEEEQEEEEG and EIDDDFFPSSEEEDEA. 2 positions are modified to phosphoserine: serine 428 and serine 429. An N6-methylated lysine; by EHMT2 modification is found at lysine 444. Phosphoserine occurs at positions 482 and 485. In terms of domain architecture, Helicase ATP-binding spans 515 to 691; it reads WELHCQQAGG…WSLFDFIFPG (177 aa). Position 528–535 (528–535) interacts with ATP; the sequence is DEMGLGKT. The DEAH box signature appears at 642 to 645; that stretch reads DEGH. The Helicase C-terminal domain maps to 839–998; the sequence is VVESLLKIWH…RRFFKSNDLY (160 aa). 3 disordered regions span residues 1040–1096, 1114–1238, and 1307–1372; these read LGTD…NRAS, SVMS…DRSS, and GHRG…GAPS. Lysine 1047 is subject to N6-methylated lysine; by EHMT2. A compositionally biased stretch (polar residues) spans 1138–1147; that stretch reads ASTSEKQGSS. The segment covering 1192 to 1201 has biased composition (basic residues); that stretch reads QPKQKAKNSK. A compositionally biased stretch (basic and acidic residues) spans 1202–1212; it reads HCRDAKFEGTR. The span at 1330 to 1345 shows a compositional bias: polar residues; sequence LPVQHPSSLTEKTQNN. The segment covering 1346–1364 has biased composition (basic and acidic residues); sequence MKKEGKAHTPEHFSGKEDG. A CSA-interacting motif (CIM) motif is present at residues 1373 to 1385; sequence SSSLLARMRARNH. A ubiquitin-binding domain (UBD) region spans residues 1387 to 1416; sequence ILPERLESDSEHLAEAAAVPPCGTEHDDLL. The winged-helix domain (WHD) stretch occupies residues 1417 to 1481; that stretch reads VDMRNFIAFQ…GIWKLKPEYC (65 aa). The segment at 1434-1481 is essential for its interaction with RNA polymerase II, transcription-coupled nucleotide excision repair activity, association with chromatin after UV irradiation and for mediating the UV-induced translocation of ERRC8 to the nuclear matrix; it reads STQEILQEFESKLSVAQSCVFRELLRNLCNFHRTPGGEGIWKLKPEYC.

This sequence belongs to the SNF2/RAD54 helicase family. Homodimer. Binds DNA. Interacts with ERCC8. Interacts with RNA polymerase II; interaction is enhanced by UV irradiation. Component of the B-WICH complex, at least composed of SMARCA5/SNF2H, BAZ1B/WSTF, SF3B1, DEK, MYO1C, ERCC6, MYBBP1A and DDX21. Interacts with KIAA1530/UVSSA. Interacts with ELOA and CUL5; the interaction is induced by DNA damaging agents or by inhibitors of RNA polymerase II elongation. Interacts (via WHD region) with RIF1. Interacts with SMARCC2/BAF170, SMARCB1/BAF47 and the neuron-specific chromatin remodeling complex (nBAF complex). Interacts with ERCC5/XPG (via C-terminus); the interaction stimulates ERCC6/CSB binding to DNA repair bubble and ERCC6/CSB ATPase activity. May form a complex composed of RNA polymerase II, ERCC6/CSB and ERCC5/XPG which associates with the DNA repair bubble during transcription-coupled nucleotide excision repair. Interacts with CAND1, CSTF1, DDX3X, DDX5, DDX17, DDX23, DHX36, HDAC1, HNRNPU, MTA2, PRPF3, PSMD3, RBBP4, SFPQ, SMARCA1, SMARCA2, TOP1, USP7 and XRCC5. In terms of processing, phosphorylated in a cell cycle-dependent manner at Ser-158 by cyclin A-CDK2 in response to DNA damage. Phosphorylation at this site promotes the intramolecular interaction of the N-terminal domain with the helicase ATP-binding domain, thereby probably releasing the inhibitory effect of the N-terminal domain on its ATPase activity. Phosphorylation is essential for its chromatin remodeling activity. Ubiquitinated at the C-terminus. Ubiquitination by the CSA complex leads to ERCC6 proteasomal degradation in a UV-dependent manner. Stabilized following interaction with KIAA1530/UVSSA, which promotes recruitment of deubiquitinating enzyme USP7, leading to deubiquitination of ERCC6 thereby preventing UV-induced degradation of ERCC6 by the proteasome.

The protein resides in the nucleus. It is found in the chromosome. The catalysed reaction is ATP + H2O = ADP + phosphate + H(+). In terms of biological role, essential factor involved in transcription-coupled nucleotide excision repair (TC-NER), a process during which RNA polymerase II-blocking lesions are rapidly removed from the transcribed strand of active genes. Plays a central role in the initiation of the TC-NER process: specifically recognizes and binds RNA polymerase II stalled at a lesion, and mediates recruitment of ERCC8/CSA, initiating DNA damage excision by TFIIH recruitment. Upon DNA-binding, it locally modifies DNA conformation by wrapping the DNA around itself, thereby modifying the interface between stalled RNA polymerase II and DNA. Acts as a chromatin remodeler at DSBs; DNA-dependent ATPase-dependent activity is essential for this function. Plays an important role in regulating the choice of the DNA double-strand breaks (DSBs) repair pathway and G2/M checkpoint activation; DNA-dependent ATPase activity is essential for this function. Regulates the DNA repair pathway choice by inhibiting non-homologous end joining (NHEJ), thereby promoting the homologous recombination (HR)-mediated repair of DSBs during the S/G2 phases of the cell cycle. Mediates the activation of the ATM- and CHEK2-dependent DNA damage responses thus preventing premature entry of cells into mitosis following the induction of DNA DSBs. Remodels chromatin by evicting histones from chromatin flanking DSBs, limiting RIF1 accumulation at DSBs thereby promoting BRCA1-mediated HR. Required for stable recruitment of ELOA and CUL5 to DNA damage sites. Also involved in UV-induced translocation of ERCC8 to the nuclear matrix. Essential for neuronal differentiation and neuritogenesis; regulates transcription and chromatin remodeling activities required during neurogenesis. This is DNA excision repair protein ERCC-6 (Ercc6) from Mus musculus (Mouse).